Consider the following 350-residue polypeptide: Heat-inducible transcription repressor HrcA (350 aa).

Belongs to the HrcA family.

Functionally, negative regulator of class I heat shock genes (grpE-dnaK-dnaJ and groELS operons). Prevents heat-shock induction of these operons. The polypeptide is Heat-inducible transcription repressor HrcA (Ligilactobacillus salivarius (strain UCC118) (Lactobacillus salivarius)).